Consider the following 329-residue polypeptide: Transcription factor RF2b (329 aa).

2 disordered regions span residues 1–24 and 62–97; these read MQEPKHTDPAAMRGAHHRRARSEV and SSGPAAAGGSDRDRAAETSSPPRPKHRHSSSVDGSG. Residues 132-195 enclose the bZIP domain; sequence DPKRAKRILA…TGLSAENAEL (64 aa). Residues 134–155 form a basic motif region; that stretch reads KRAKRILANRQSAARSKERKAR. The interval 160-174 is leucine-zipper; sequence LERKVQTLQTEATTL. Residues 260–303 form a disordered region; that stretch reads RQNGGTQLPPQFQPPRPNVPNHMLSHPNGLQDIMQQDPLGRLQG.

It belongs to the bZIP family. Binds DNA as a homodimer or as a heterodimer with RF2a. The heterodimer binds stronger to DNA than the homodimer. In terms of tissue distribution, expressed at high levels in roots, low level in leaf sheath, but not in leaf blade. Predominantly expressed in vascular tissues.

The protein resides in the nucleus. Transcription factor probably involved in vascular development and shoot tissue organization. Binds to the DNA sequence 5'-CCGAGTGTGCCCCTGG-3' present in the promoter region Box II of the phloem-specific rice tungro bacilliform virus (RTBV) promoter. May regulate tissue-specific expression of the RTBV promoter and virus replication. The sequence is that of Transcription factor RF2b (RF2b) from Oryza sativa subsp. japonica (Rice).